Here is a 329-residue protein sequence, read N- to C-terminus: Two pore potassium channel protein sup-9 (329 aa).

At 1–8 (MKRQNIRT) the chain is on the cytoplasmic side. A helical membrane pass occupies residues 9–29 (LSLIVCTLTYLLVGAAVFDAL). Asn53 carries N-linked (GlcNAc...) asparagine glycosylation. Residues 80–100 (FSGAFYFATTVITTIGYGHST) constitute an intramembrane region (pore-forming). The Selectivity filter motif lies at 93 to 98 (TIGYGH). A helical membrane pass occupies residues 108–128 (VFCMLYALAGIPLGLIMFQSI). Over 129–157 (GERMNTFAAKLLRFIRRAAGKQPIVTSSD) the chain is Cytoplasmic. Residues 158 to 178 (LIIFCTGWGGLLIFGGAFMFS) traverse the membrane as a helical segment. A glycan (N-linked (GlcNAc...) asparagine) is linked at Asn182. The segment at residues 186–206 (FDAVYYCFVTLTTIGFGDYVA) is an intramembrane region (pore-forming). Residues 198-203 (TIGFGD) carry the Selectivity filter motif. The chain crosses the membrane as a helical span at residues 220 to 240 (VFFSLVFILFGLTVISAAMNL). Topologically, residues 241–329 (LVLRFLTMNT…FSGMTTRPKY (89 aa)) are cytoplasmic. The segment at 289 to 296 (SLASCSCY) is may be important for regulation by and/or interaction with sup-10. The disordered stretch occupies residues 307–329 (HRKHTEPHGGPPTFSGMTTRPKY).

This sequence belongs to the two pore domain potassium channel (TC 1.A.1.8) family. May form a complex with the regulatory subunits unc-93 and sup-10. As to expression, low levels along surface of body-wall muscle cells, in vulval and intestinal muscles and, more weakly, in anal depressor and sphincter muscles. Also expressed in a subset of head neurons.

It localises to the membrane. Functionally, potassium channel involved in coordination of muscle contraction. Activity is regulated by sup-18. This is Two pore potassium channel protein sup-9 from Caenorhabditis elegans.